A 704-amino-acid polypeptide reads, in one-letter code: Polyribonucleotide nucleotidyltransferase (704 aa).

Mg(2+)-binding residues include Asp487 and Asp493. The region spanning 554-613 (PRLLTIKIHPDKIREVIGKGGSTIQAITKETGTQIDIQDDGTIIIASVNAIAAQAAKSRI) is the KH domain. Residues 623–691 (GRIYEGKVAK…KQGRIRLSIK (69 aa)) enclose the S1 motif domain.

The protein belongs to the polyribonucleotide nucleotidyltransferase family. As to quaternary structure, component of the RNA degradosome, which is a multiprotein complex involved in RNA processing and mRNA degradation. Mg(2+) serves as cofactor.

Its subcellular location is the cytoplasm. The catalysed reaction is RNA(n+1) + phosphate = RNA(n) + a ribonucleoside 5'-diphosphate. Involved in mRNA degradation. Catalyzes the phosphorolysis of single-stranded polyribonucleotides processively in the 3'- to 5'-direction. This Xanthomonas campestris pv. campestris (strain B100) protein is Polyribonucleotide nucleotidyltransferase.